Reading from the N-terminus, the 244-residue chain is 1-(5-phosphoribosyl)-5-[(5-phosphoribosylamino)methylideneamino] imidazole-4-carboxamide isomerase (244 aa).

Catalysis depends on Asp9, which acts as the Proton acceptor. The active-site Proton donor is the Asp131.

This sequence belongs to the HisA/HisF family.

The protein resides in the cytoplasm. The enzyme catalyses 1-(5-phospho-beta-D-ribosyl)-5-[(5-phospho-beta-D-ribosylamino)methylideneamino]imidazole-4-carboxamide = 5-[(5-phospho-1-deoxy-D-ribulos-1-ylimino)methylamino]-1-(5-phospho-beta-D-ribosyl)imidazole-4-carboxamide. Its pathway is amino-acid biosynthesis; L-histidine biosynthesis; L-histidine from 5-phospho-alpha-D-ribose 1-diphosphate: step 4/9. This Campylobacter jejuni subsp. jejuni serotype O:6 (strain 81116 / NCTC 11828) protein is 1-(5-phosphoribosyl)-5-[(5-phosphoribosylamino)methylideneamino] imidazole-4-carboxamide isomerase.